Reading from the N-terminus, the 209-residue chain is High-affinity nitrate transporter 3.2 (209 aa).

An N-terminal signal peptide occupies residues 1 to 22 (MAIHTLLFVSLLIFSLIESSSG). A helical membrane pass occupies residues 177–197 (LDIASTFFSVFSVVSLFVFFV).

The protein belongs to the NAR2 family. As to expression, bearly detected in roots and shoots.

It is found in the cell membrane. Functionally, acts as a dual component transporter with NTR2.1. Required for high-affinity nitrate transport. This Arabidopsis thaliana (Mouse-ear cress) protein is High-affinity nitrate transporter 3.2.